The chain runs to 211 residues: Probable transcriptional regulatory protein SgaR (211 aa).

The Response regulatory domain maps to 10-126 (EVSIVDQNPV…VLLEAVVSVA (117 aa)). Position 15 is a 4-aspartylphosphate (aspartate 15). Residues 141-206 (NHDPLESLTA…MAVALHVSIN (66 aa)) enclose the HTH luxR-type domain. Positions 165-184 (NLQIAARTGISRNTVKYHLK) form a DNA-binding region, H-T-H motif.

Not known. Could act on the sgaA gene expression. The sequence is that of Probable transcriptional regulatory protein SgaR (sgaR) from Hyphomicrobium methylovorum.